A 410-amino-acid polypeptide reads, in one-letter code: Translation initiation factor 2 subunit gamma (410 aa).

Residues 6–203 (QSEVNIGMVG…AIQEFIPTPK (198 aa)) form the tr-type G domain. Residues 15 to 22 (GHVDHGKT) form a G1 region. Positions 18, 22, 43, and 45 each coordinate Mg(2+). 18–23 (DHGKTS) is a binding site for GTP. The tract at residues 43-47 (GISIR) is G2. The Zn(2+) site is built by Cys58, Cys61, Cys73, and Cys76. Residues 90-93 (DAPG) form a G3 region. GTP contacts are provided by residues 146–149 (NKID) and 181–183 (SAH). Positions 146–149 (NKID) are G4. Residues 181 to 183 (SAH) are G5.

The protein belongs to the TRAFAC class translation factor GTPase superfamily. Classic translation factor GTPase family. EIF2G subfamily. In terms of assembly, heterotrimer composed of an alpha, a beta and a gamma chain. Requires Mg(2+) as cofactor.

The enzyme catalyses GTP + H2O = GDP + phosphate + H(+). Functionally, eIF-2 functions in the early steps of protein synthesis by forming a ternary complex with GTP and initiator tRNA. This is Translation initiation factor 2 subunit gamma from Methanococcus maripaludis (strain C6 / ATCC BAA-1332).